The chain runs to 776 residues: Glucocorticoid receptor (776 aa).

Disordered stretches follow at residues 1 to 25 (MDPK…YNDK), 47 to 86 (SCPT…PQPD), and 394 to 415 (SSPG…STGP). The tract at residues 1-419 (MDPKDLLKPS…STSTGPPPKL (419 aa)) is modulating. The segment covering 47–83 (SCPTSTASQSNTRQQQHFQKQLTATGDSTNGLNNNVP) has biased composition (polar residues). A compositionally biased stretch (low complexity) spans 403 to 413 (SPSPSTSSTST). NR C4-type zinc fingers lie at residues 420–440 (CLVC…CGSC) and 456–480 (CAGR…YRKC). The nuclear receptor DNA-binding region spans 420–485 (CLVCSDEASG…RYRKCLQAGM (66 aa)). The tract at residues 486–522 (NLEARKTKKKIKGIQQSTTATARESPETSMTRTLVPA) is hinge. Residues 523 to 757 (SVAQLTPTLI…FPDMLSEIIS (235 aa)) form the NR LBD domain.

It belongs to the nuclear hormone receptor family. NR3 subfamily. As to quaternary structure, heteromultimeric cytoplasmic complex with HSP90. Upon ligand binding the complex undergoes a conformation change and moves to the nucleus, where it dissociates. Binds to DNA as a homodimer, and as heterodimer with NR3C2. Interaction with numerous other transcription factors modulates transcription activation. As to expression, expressed in liver with relative abundance.

The protein resides in the cytoplasm. Its subcellular location is the nucleus. The protein localises to the mitochondrion. It localises to the cytoskeleton. It is found in the spindle. The protein resides in the microtubule organizing center. Its subcellular location is the centrosome. Its function is as follows. Receptor for glucocorticoids (GC). Has a dual mode of action: as a transcription factor that binds to glucocorticoid response elements (GRE), both for nuclear and mitochondrial DNA, and as a modulator of other transcription factors. Affects inflammatory responses, cellular proliferation and differentiation in target tissues. Involved in chromatin remodeling. Plays a role in rapid mRNA degradation by binding to the 5' UTR of target mRNAs and interacting with PNRC2 in a ligand-dependent manner which recruits the RNA helicase UPF1 and the mRNA-decapping enzyme DCP1A, leading to RNA decay. Could act as a coactivator for STAT5-dependent transcription upon growth hormone (GH) stimulation and could reveal an essential role of hepatic GR in the control of body growth. Mediates glucocorticoid-induced apoptosis. Promotes accurate chromosome segregation during mitosis. May act as a tumor suppressor. May play a negative role in adipogenesis through the regulation of lipolytic and antilipogenic gene expression. The sequence is that of Glucocorticoid receptor (nr3c1) from Xenopus laevis (African clawed frog).